The primary structure comprises 263 residues: Hydroxyacylglutathione hydrolase (263 aa).

Zn(2+)-binding residues include His55, His57, Asp59, His60, His117, Asp134, and His172.

The protein belongs to the metallo-beta-lactamase superfamily. Glyoxalase II family. As to quaternary structure, monomer. The cofactor is Zn(2+).

The enzyme catalyses an S-(2-hydroxyacyl)glutathione + H2O = a 2-hydroxy carboxylate + glutathione + H(+). It functions in the pathway secondary metabolite metabolism; methylglyoxal degradation; (R)-lactate from methylglyoxal: step 2/2. In terms of biological role, thiolesterase that catalyzes the hydrolysis of S-D-lactoyl-glutathione to form glutathione and D-lactic acid. This chain is Hydroxyacylglutathione hydrolase, found in Shewanella baltica (strain OS223).